Reading from the N-terminus, the 144-residue chain is INO80 complex subunit 5 (144 aa).

Residues Met1–Ile58 are disordered. The segment covering Ser35 to Ile58 has biased composition (polar residues).

Component of the INO80 chromatin remodeling complex.

The protein resides in the nucleus. Functionally, component of the INO80 complex which remodels chromatin by shifting nucleosomes and is involved in DNA repair. This Schizosaccharomyces pombe (strain 972 / ATCC 24843) (Fission yeast) protein is INO80 complex subunit 5 (iec5).